A 716-amino-acid polypeptide reads, in one-letter code: Fatty acid oxidation complex subunit alpha (716 aa).

The interval 1–189 is enoyl-CoA hydratase/isomerase; the sequence is MIYQSPTIQV…KVGAVDAVVA (189 aa). Residue Asp-296 participates in substrate binding. The segment at 311 to 716 is 3-hydroxyacyl-CoA dehydrogenase; that stretch reads KDVKSAAVLG…AANNGSYYQA (406 aa). Residues Met-324, Asp-343, 400–402, Lys-407, and Ser-429 contribute to the NAD(+) site; that span reads VVE. The active-site For 3-hydroxyacyl-CoA dehydrogenase activity is His-450. Asn-453 serves as a coordination point for NAD(+). Asn-500 and Tyr-660 together coordinate substrate.

In the N-terminal section; belongs to the enoyl-CoA hydratase/isomerase family. It in the C-terminal section; belongs to the 3-hydroxyacyl-CoA dehydrogenase family. In terms of assembly, heterotetramer of two alpha chains (FadB) and two beta chains (FadA).

It catalyses the reaction a (3S)-3-hydroxyacyl-CoA + NAD(+) = a 3-oxoacyl-CoA + NADH + H(+). The enzyme catalyses a (3S)-3-hydroxyacyl-CoA = a (2E)-enoyl-CoA + H2O. The catalysed reaction is a 4-saturated-(3S)-3-hydroxyacyl-CoA = a (3E)-enoyl-CoA + H2O. It carries out the reaction (3S)-3-hydroxybutanoyl-CoA = (3R)-3-hydroxybutanoyl-CoA. It catalyses the reaction a (3Z)-enoyl-CoA = a 4-saturated (2E)-enoyl-CoA. The enzyme catalyses a (3E)-enoyl-CoA = a 4-saturated (2E)-enoyl-CoA. It participates in lipid metabolism; fatty acid beta-oxidation. Functionally, involved in the aerobic and anaerobic degradation of long-chain fatty acids via beta-oxidation cycle. Catalyzes the formation of 3-oxoacyl-CoA from enoyl-CoA via L-3-hydroxyacyl-CoA. It can also use D-3-hydroxyacyl-CoA and cis-3-enoyl-CoA as substrate. This is Fatty acid oxidation complex subunit alpha from Shewanella sp. (strain MR-7).